Here is a 150-residue protein sequence, read N- to C-terminus: Cell division protein SepF (150 aa).

Positions 26-45 are disordered; sequence DREEIPEEHESKDRTAYQSK.

This sequence belongs to the SepF family. As to quaternary structure, homodimer. Interacts with FtsZ.

The protein resides in the cytoplasm. In terms of biological role, cell division protein that is part of the divisome complex and is recruited early to the Z-ring. Probably stimulates Z-ring formation, perhaps through the cross-linking of FtsZ protofilaments. Its function overlaps with FtsA. The polypeptide is Cell division protein SepF (Bacillus licheniformis (strain ATCC 14580 / DSM 13 / JCM 2505 / CCUG 7422 / NBRC 12200 / NCIMB 9375 / NCTC 10341 / NRRL NRS-1264 / Gibson 46)).